Reading from the N-terminus, the 385-residue chain is Outer membrane porin protein BP0840 (385 aa).

An N-terminal signal peptide occupies residues 1–20; it reads MKKTLLAAALLAGFAGAAQA.

It to bacterial outer membrane proteins and porins. In terms of assembly, homotrimer.

The protein resides in the cell outer membrane. In terms of biological role, forms anion selective channels. The protein is Outer membrane porin protein BP0840 of Bordetella pertussis (strain Tohama I / ATCC BAA-589 / NCTC 13251).